Here is a 214-residue protein sequence, read N- to C-terminus: Phosphopantothenoylcysteine decarboxylase HAL3 (214 aa).

FMN contacts are provided by residues 30–32 (GSV) and 55–57 (TRA). Histidine 92 serves as the catalytic Proton donor. Residues 108 to 111 (SANT) and alanine 142 each bind FMN. Residues asparagine 144, arginine 174, and alanine 176 each contribute to the N-[(R)-4-phosphopantothenoyl]-L-cysteine site. The active-site Proton donor is cysteine 177. Methionine 185 is a binding site for N-[(R)-4-phosphopantothenoyl]-L-cysteine.

Belongs to the HFCD (homooligomeric flavin containing Cys decarboxylase) superfamily. As to quaternary structure, homotrimer. The cofactor is FMN. In terms of tissue distribution, mainly expressed in stems, to a lower extent in flowers, leaves and fruits, and at basal levels in roots.

The protein resides in the cell membrane. It localises to the cytoplasm. It catalyses the reaction N-[(R)-4-phosphopantothenoyl]-L-cysteine + H(+) = (R)-4'-phosphopantetheine + CO2. It functions in the pathway cofactor biosynthesis; coenzyme A biosynthesis; CoA from (R)-pantothenate: step 3/5. Involved in plant growth, and promotes salt and osmotic tolerance, probably via coenzyme A (CoA) accumulation and endogenous proline accumulation. Catalyzes the decarboxylation of 4'-phosphopantothenoylcysteine to 4'-phosphopantetheine, a key step in coenzyme A biosynthesis. Required for roots development. This chain is Phosphopantothenoylcysteine decarboxylase HAL3, found in Malus domestica (Apple).